The primary structure comprises 233 residues: Large ribosomal subunit protein uL1 (233 aa).

It belongs to the universal ribosomal protein uL1 family. In terms of assembly, part of the 50S ribosomal subunit.

Its function is as follows. Binds directly to 23S rRNA. The L1 stalk is quite mobile in the ribosome, and is involved in E site tRNA release. Protein L1 is also a translational repressor protein, it controls the translation of the L11 operon by binding to its mRNA. This is Large ribosomal subunit protein uL1 from Vibrio cholerae serotype O1 (strain ATCC 39315 / El Tor Inaba N16961).